We begin with the raw amino-acid sequence, 336 residues long: Cell division protein ZipA (336 aa).

Residues 1–6 (MMQDLR) are Periplasmic-facing. A helical transmembrane segment spans residues 7–27 (LILIVVGAIAIIALLLHGLWT). Residues 28–336 (SRKERSSLFR…RIRDVLKANA (309 aa)) lie on the Cytoplasmic side of the membrane. Residues 40-51 (PVKRAKKARDET) are compositionally biased toward basic and acidic residues. The interval 40 to 190 (PVKRAKKARD…APAQPQQPAE (151 aa)) is disordered. Over residues 76–89 (SFSSSSFDNASFDN) the composition is skewed to low complexity. Polar residues predominate over residues 126-138 (PRSQVRGDSNPQV). Low complexity predominate over residues 179–190 (QPAPAQPQQPAE).

The protein belongs to the ZipA family. Interacts with FtsZ via their C-terminal domains.

It is found in the cell inner membrane. Essential cell division protein that stabilizes the FtsZ protofilaments by cross-linking them and that serves as a cytoplasmic membrane anchor for the Z ring. Also required for the recruitment to the septal ring of downstream cell division proteins. In Pectobacterium carotovorum subsp. carotovorum (strain PC1), this protein is Cell division protein ZipA.